The primary structure comprises 1035 residues: NHS-like protein 3 (1035 aa).

Val2 is lipidated: N-myristoyl glycine. 3 disordered regions span residues 23–44, 76–105, and 133–162; these read KAEN…AVDE, QEKQ…DEDN, and IQRK…RRST. Over residues 76–90 the composition is skewed to basic and acidic residues; it reads QEKQKLNKGGWDHGD. A phosphoserine mark is found at Ser93, Ser138, Ser145, and Ser161. Thr162 carries the post-translational modification Phosphothreonine. Phosphoserine is present on Ser215. Residue Arg320 is modified to Asymmetric dimethylarginine. A phosphoserine mark is found at Ser322, Ser327, Ser330, Ser338, Ser339, Ser341, and Ser342. Disordered regions lie at residues 332-869 and 885-1035; these read RSLG…APSS and SEGL…KELA. The segment covering 338–365 has biased composition (low complexity); that stretch reads SSVSSPQPRSRHPSSSSDTWSHSQSSDT. Residues 366 to 388 are compositionally biased toward polar residues; the sequence is IVSDGSTLSSKGGSEGQPESSTA. A phosphoserine mark is found at Ser400, Ser404, and Ser409. The segment covering 411-429 has biased composition (polar residues); the sequence is AEASDTLSIRSSGQLSGRS. Basic residues predominate over residues 431–449; that stretch reads SLRKLKRPPPPPRRTHSLH. Positions 517–532 are enriched in low complexity; that stretch reads RTLSPSSGYSSQSGTP. Thr531 carries the post-translational modification Phosphothreonine. Positions 543-552 are enriched in pro residues; sequence PASPGKAQPP. Ser545 carries the post-translational modification Phosphoserine. Over residues 562 to 589 the composition is skewed to low complexity; that stretch reads SPGASVSSSLTSLCSSSSDPAPSDRSGP. At Thr593 the chain carries Phosphothreonine. Residues 602–624 are compositionally biased toward pro residues; sequence PPHPKVPAPFSPPPSKPRSPNPA. At Ser612 the chain carries Phosphoserine. Low complexity-rich tracts occupy residues 625–645 and 652–662; these read APAL…DASP and QTTLTPLQESP. 2 positions are modified to phosphoserine: Ser669 and Ser673. 2 stretches are compositionally biased toward pro residues: residues 669–685 and 709–718; these read SPPP…PPPT and NWPPPPPPAP. A compositionally biased stretch (low complexity) spans 737 to 765; that stretch reads SVASPEPAGPSGSPELVSSPAASSSSATA. Pro residues predominate over residues 771–784; that stretch reads PGSPDPPPAPPAPA. A compositionally biased stretch (low complexity) spans 838 to 848; the sequence is GAPTPALGPSA. Residues Ser858, Ser862, and Ser868 each carry the phosphoserine modification. Positions 894-906 are enriched in pro residues; the sequence is NGPPEAEPRPPQS. Ser929, Ser959, Ser971, and Ser979 each carry phosphoserine. Positions 961–980 are enriched in pro residues; it reads KAPPPVARKPSVGVPPPASP. Residues 999–1008 are compositionally biased toward basic and acidic residues; the sequence is TQDRTKRELA.

Expressed in lung.

Its function is as follows. Able to directly activate the TNF-NFkappaB signaling pathway. The protein is NHS-like protein 3 of Homo sapiens (Human).